The chain runs to 263 residues: Hydroxyethylthiazole kinase 2 (263 aa).

A substrate-binding site is contributed by methionine 42. ATP contacts are provided by lysine 118 and threonine 164. Glycine 191 contacts substrate.

The protein belongs to the Thz kinase family. Mg(2+) is required as a cofactor.

The catalysed reaction is 5-(2-hydroxyethyl)-4-methylthiazole + ATP = 4-methyl-5-(2-phosphooxyethyl)-thiazole + ADP + H(+). It participates in cofactor biosynthesis; thiamine diphosphate biosynthesis; 4-methyl-5-(2-phosphoethyl)-thiazole from 5-(2-hydroxyethyl)-4-methylthiazole: step 1/1. In terms of biological role, catalyzes the phosphorylation of the hydroxyl group of 4-methyl-5-beta-hydroxyethylthiazole (THZ). This is Hydroxyethylthiazole kinase 2 from Clostridium botulinum (strain Loch Maree / Type A3).